The following is a 240-amino-acid chain: ATP synthase subunit a 1 (240 aa).

5 consecutive transmembrane segments (helical) span residues 23–43 (GQVLITSWIVIGILVIVSVLA), 82–102 (VPFIGTLFLFIFVSNWSGALF), 120–140 (DINTTVALALCTSFVYFYAGF), 186–206 (LVVAVLVLLVPLIVPLPVMLL), and 207–227 (GLFTSGIQALVFATLAGAYIH).

This sequence belongs to the ATPase A chain family. F-type ATPases have 2 components, CF(1) - the catalytic core - and CF(0) - the membrane proton channel. CF(1) has five subunits: alpha(3), beta(3), gamma(1), delta(1), epsilon(1). CF(0) has four main subunits: a, b, b' and c.

Its subcellular location is the cellular thylakoid membrane. Its function is as follows. Key component of the proton channel; it plays a direct role in the translocation of protons across the membrane. The polypeptide is ATP synthase subunit a 1 (Acaryochloris marina (strain MBIC 11017)).